The sequence spans 172 residues: Putative phosphoesterase BCE_1348 (172 aa).

His34 (proton donor) is an active-site residue. 2 consecutive short sequence motifs (HXTX) follow at residues His34–Leu37 and His115–Ile118. Residue His115 is the Proton acceptor of the active site.

Belongs to the 2H phosphoesterase superfamily. YjcG family.

This is Putative phosphoesterase BCE_1348 from Bacillus cereus (strain ATCC 10987 / NRS 248).